The chain runs to 76 residues: Conotoxin ArMLCL-022 (76 aa).

The first 19 residues, 1–19 (MLCLPVFIILLLLASTAAS), serve as a signal peptide directing secretion. A propeptide spanning residues 20 to 52 (NPLETRIQSDLIRAALEDADMKTERGFLGVLMK) is cleaved from the precursor.

It belongs to the conotoxin T superfamily. Expressed by the venom duct.

The protein localises to the secreted. The sequence is that of Conotoxin ArMLCL-022 from Conus arenatus (Sand-dusted cone).